Consider the following 558-residue polypeptide: MKLFKSILLIAACHAAQASAAIDINADPNLTGAAPLTGILNGQQSDTQNMSGFDNTPPPSPPVVMSRMFGAQLFNGTSADSGATVGFNPDYILNPGDSIQVRLWGAFTFDGALQVDPKGNIFLPNVGPVKVAGVSNSQLNALVTSKVKEVYQSNVNVYASLLQAQPVKVYVTGFVRNPGLYGGVTSDSLLNYLIKAGGVDPERGSYVDIVVKRGNRVRSNVNLYDFLLNGKLGLSQFADGDTIIVGPRQHTFSVQGDVFNSYDFEFRESSIPVTEALSWARPKPGATHITIMRKQGLQKRSEYYPISSAPGRMLQNGDTLIVSTDRYAGTIQVRVEGAHSGEHAMVLPYGSTMRAVLEKVRPNSMSQMNAVQLYRPSVAQRQKEMLNLSLQKLEEASLSAQSSTKEEASLRMQEAQLISRFVAKARTVVPKGEVILNESNIDSVLLEDGDVINIPEKTSLVMVHGEVLFPNAVSWQKGMTTEDYIEKCGGLTQKSGNARIIVIRQNGAAVNAEDVDSLKPGDEIMVLPKYESKNIEVTRGISTILYQLAVGAKVILSL.

Positions 1–20 (MKLFKSILLIAACHAAQASA) are cleaved as a signal peptide.

This sequence to E.coli K5 KpsD.

Its subcellular location is the periplasm. Its function is as follows. Involved in the translocation of the polysialic acid capsule across the outer membrane to the cell surface. May function as the periplasmic binding element of the PSA transport system, in which it transiently interacts with the membrane component of the transporter, binds polysaccharide and transports the polymer to a component in the outer membrane. The chain is Polysialic acid transport protein KpsD (kpsD) from Escherichia coli.